The primary structure comprises 180 residues: ATP synthase subunit delta (180 aa).

It belongs to the ATPase delta chain family. F-type ATPases have 2 components, F(1) - the catalytic core - and F(0) - the membrane proton channel. F(1) has five subunits: alpha(3), beta(3), gamma(1), delta(1), epsilon(1). F(0) has three main subunits: a(1), b(2) and c(10-14). The alpha and beta chains form an alternating ring which encloses part of the gamma chain. F(1) is attached to F(0) by a central stalk formed by the gamma and epsilon chains, while a peripheral stalk is formed by the delta and b chains.

It localises to the cell membrane. In terms of biological role, f(1)F(0) ATP synthase produces ATP from ADP in the presence of a proton or sodium gradient. F-type ATPases consist of two structural domains, F(1) containing the extramembraneous catalytic core and F(0) containing the membrane proton channel, linked together by a central stalk and a peripheral stalk. During catalysis, ATP synthesis in the catalytic domain of F(1) is coupled via a rotary mechanism of the central stalk subunits to proton translocation. Functionally, this protein is part of the stalk that links CF(0) to CF(1). It either transmits conformational changes from CF(0) to CF(1) or is implicated in proton conduction. This chain is ATP synthase subunit delta, found in Latilactobacillus sakei subsp. sakei (strain 23K) (Lactobacillus sakei subsp. sakei).